The sequence spans 661 residues: Glycogen debranching enzyme (661 aa).

Asp-338 functions as the Nucleophile in the catalytic mechanism. The active-site Proton donor is the Glu-373. Residues 460–481 form a disordered region; it reads NQLNGEGNRDGSDRNFSNNHGV.

This sequence belongs to the glycosyl hydrolase 13 family.

The catalysed reaction is Hydrolysis of (1-&gt;6)-alpha-D-glucosidic linkages to branches with degrees of polymerization of three or four glucose residues in limit dextrin.. Its pathway is glycan degradation; glycogen degradation. Removes maltotriose and maltotetraose chains that are attached by 1,6-alpha-linkage to the limit dextrin main chain, generating a debranched limit dextrin. This is Glycogen debranching enzyme from Serratia proteamaculans (strain 568).